The chain runs to 438 residues: Adenylosuccinate synthetase (438 aa).

Residues 13 to 19 (GDEGKGK) and 41 to 43 (GHT) contribute to the GTP site. Asp-14 (proton acceptor) is an active-site residue. Mg(2+) contacts are provided by Asp-14 and Gly-41. IMP-binding positions include 14–17 (DEGK), 39–42 (NAGH), Thr-130, Arg-144, Gln-225, Thr-240, and Arg-310. The active-site Proton donor is the His-42. 306-312 (ATTGRLR) contacts substrate. GTP is bound by residues Arg-312, 338–340 (KLD), and 421–423 (STG).

The protein belongs to the adenylosuccinate synthetase family. Homodimer. It depends on Mg(2+) as a cofactor.

The protein localises to the cytoplasm. It catalyses the reaction IMP + L-aspartate + GTP = N(6)-(1,2-dicarboxyethyl)-AMP + GDP + phosphate + 2 H(+). It functions in the pathway purine metabolism; AMP biosynthesis via de novo pathway; AMP from IMP: step 1/2. Functionally, plays an important role in the de novo pathway of purine nucleotide biosynthesis. Catalyzes the first committed step in the biosynthesis of AMP from IMP. The protein is Adenylosuccinate synthetase of Vibrio vulnificus (strain YJ016).